The primary structure comprises 369 residues: Putative agmatine deiminase (369 aa).

Cysteine 361 functions as the Amidino-cysteine intermediate in the catalytic mechanism.

This sequence belongs to the agmatine deiminase family.

The catalysed reaction is agmatine + H2O = N-carbamoylputrescine + NH4(+). In Streptococcus mutans serotype c (strain ATCC 700610 / UA159), this protein is Putative agmatine deiminase.